The following is a 476-amino-acid chain: Serine/threonine-protein kinase Chk1 (476 aa).

Residues 1 to 265 are interaction with CLSPN; that stretch reads MAVPFVEDWD…IPDIKKDRWY (265 aa). The 257-residue stretch at 9–265 folds into the Protein kinase domain; the sequence is WDLVQTLGEG…IPDIKKDRWY (257 aa). ATP is bound by residues 15–23 and K38; that span reads LGEGAYGEV. D130 serves as the catalytic Proton acceptor. A Glycyl lysine isopeptide (Lys-Gly) (interchain with G-Cter in ubiquitin) cross-link involves residue K132. The interval 267–329 is disordered; sequence KPLNRGAKRP…EPRTGLSLWD (63 aa). At S280 the chain carries Phosphoserine; by PKB/AKT1. The span at 280–291 shows a compositional bias: low complexity; it reads SGGMSESSSGFS. Phosphoserine is present on residues S286, S296, and S301. Residues 298 to 320 are compositionally biased toward polar residues; it reads LDFSPINSGSSEENVKFSSSQPE. A phosphoserine; by ATM and ATR mark is found at S317 and S345. Positions 391-476 are autoinhibitory region; it reads QCLKETFEKL…SSQKVWFPVT (86 aa). A Glycyl lysine isopeptide (Lys-Gly) (interchain with G-Cter in ubiquitin) cross-link involves residue K436. A phosphoserine mark is found at S463, S467, and S468.

The protein belongs to the protein kinase superfamily. CAMK Ser/Thr protein kinase family. NIM1 subfamily. As to quaternary structure, interacts (phosphorylated by ATR) with RAD51. Interacts with and phosphorylates CLSPN, an adapter protein that regulates the ATR-dependent phosphorylation of CHEK1. Interacts with BRCA1. Interacts with and phosphorylates CDC25A, CDC25B and CDC25C. Interacts with FBXO6, which regulates CHEK1. Interacts with PPM1D, which regulates CHEK1 through dephosphorylation. Interacts with TIMELESS; DNA damage-dependent. Interacts with FEM1B; activates CHEK1 in response to stress. Interacts with TLK1. Interacts with XPO1 and YWHAZ. Interacts with CDK5RAP3; antagonizes CHEK1. Phosphorylated by ATR in a RAD17-dependent manner in response to ultraviolet irradiation and inhibition of DNA replication. Phosphorylated by ATM in response to ionizing irradiation. ATM and ATR can both phosphorylate Ser-317 and Ser-345 and this results in enhanced kinase activity. Phosphorylation at Ser-345 induces a change in the conformation of the protein, activates the kinase activity and is a prerequisite for interaction with FBXO6 and subsequent ubiquitination at Lys-436. Phosphorylation at Ser-345 also increases binding to 14-3-3 proteins and promotes nuclear retention. Conversely, dephosphorylation at Ser-345 by PPM1D may contribute to exit from checkpoint mediated cell cycle arrest. Phosphorylation at Ser-280 by AKT1/PKB, may promote mono and/or diubiquitination. Also phosphorylated at undefined residues during mitotic arrest, resulting in decreased activity. In terms of processing, ubiquitinated. Mono or diubiquitination promotes nuclear exclusion. The activated form (phosphorylated on Ser-345) is polyubiquitinated at Lys-436 by some SCF-type E3 ubiquitin ligase complex containing FBXO6 promoting its degradation. Ubiquitination and degradation are required to terminate the checkpoint and ensure that activated CHEK1 does not accumulate as cells progress through S phase, when replication forks encounter transient impediments during normal DNA replication. 'Lys-63'-mediated ubiquitination by TRAF4 at Lys-132 activates cell cycle arrest and activation of DNA repair. Post-translationally, proteolytically cleaved at the C-terminus by SPRTN during normal DNA replication, thereby promoting CHEK1 removal from chromatin and activating the protein kinase activity. As to expression, expressed in brain, heart, liver, lung, skeletal muscle, spleen and testis. In terms of tissue distribution, expressed only in liver.

The protein localises to the nucleus. It localises to the chromosome. Its subcellular location is the cytoplasm. The protein resides in the cytoskeleton. It is found in the microtubule organizing center. The protein localises to the centrosome. The enzyme catalyses L-seryl-[protein] + ATP = O-phospho-L-seryl-[protein] + ADP + H(+). It catalyses the reaction L-threonyl-[protein] + ATP = O-phospho-L-threonyl-[protein] + ADP + H(+). Its activity is regulated as follows. Activated through phosphorylation predominantly by ATR but also by ATM in response to DNA damage or inhibition of DNA replication. Activation is modulated by several mediators including CLSPN, BRCA1 and FEM1B. Proteolytic cleavage at the C-terminus by SPRTN during normal DNA replication activates the protein kinase activity. In terms of biological role, serine/threonine-protein kinase which is required for checkpoint-mediated cell cycle arrest and activation of DNA repair in response to the presence of DNA damage or unreplicated DNA. May also negatively regulate cell cycle progression during unperturbed cell cycles. This regulation is achieved by a number of mechanisms that together help to preserve the integrity of the genome. Recognizes the substrate consensus sequence [R-X-X-S/T]. Binds to and phosphorylates CDC25A, CDC25B and CDC25C. Phosphorylation of CDC25A at 'Ser-178' and 'Thr-507' and phosphorylation of CDC25C at 'Ser-216' creates binding sites for 14-3-3 proteins which inhibit CDC25A and CDC25C. Phosphorylation of CDC25A at 'Ser-76', 'Ser-124', 'Ser-178', 'Ser-279' and 'Ser-293' promotes proteolysis of CDC25A. Phosphorylation of CDC25A at 'Ser-76' primes the protein for subsequent phosphorylation at 'Ser-79', 'Ser-82' and 'Ser-88' by NEK11, which is required for polyubiquitination and degradation of CDCD25A. Inhibition of CDC25 leads to increased inhibitory tyrosine phosphorylation of CDK-cyclin complexes and blocks cell cycle progression. Also phosphorylates NEK6. Binds to and phosphorylates RAD51 at 'Thr-309', which promotes the release of RAD51 from BRCA2 and enhances the association of RAD51 with chromatin, thereby promoting DNA repair by homologous recombination. Phosphorylates multiple sites within the C-terminus of TP53, which promotes activation of TP53 by acetylation and promotes cell cycle arrest and suppression of cellular proliferation. Also promotes repair of DNA cross-links through phosphorylation of FANCE. Binds to and phosphorylates TLK1 at 'Ser-743', which prevents the TLK1-dependent phosphorylation of the chromatin assembly factor ASF1A. This may enhance chromatin assembly both in the presence or absence of DNA damage. May also play a role in replication fork maintenance through regulation of PCNA. May regulate the transcription of genes that regulate cell-cycle progression through the phosphorylation of histones. Phosphorylates histone H3.1 (to form H3T11ph), which leads to epigenetic inhibition of a subset of genes. May also phosphorylate RB1 to promote its interaction with the E2F family of transcription factors and subsequent cell cycle arrest. Phosphorylates SPRTN, promoting SPRTN recruitment to chromatin. Reduces replication stress and activates the G2/M checkpoint, by phosphorylating and inactivating PABIR1/FAM122A and promoting the serine/threonine-protein phosphatase 2A-mediated dephosphorylation and stabilization of WEE1 levels and activity. The polypeptide is Serine/threonine-protein kinase Chk1 (Chek1) (Rattus norvegicus (Rat)).